Here is a 102-residue protein sequence, read N- to C-terminus: NADH-quinone oxidoreductase subunit K (102 aa).

The next 3 membrane-spanning stretches (helical) occupy residues Leu6–Ala26, Met30–Ala50, and Met63–Leu83.

It belongs to the complex I subunit 4L family. NDH-1 is composed of 14 different subunits. Subunits NuoA, H, J, K, L, M, N constitute the membrane sector of the complex.

The protein resides in the cell inner membrane. It catalyses the reaction a quinone + NADH + 5 H(+)(in) = a quinol + NAD(+) + 4 H(+)(out). Functionally, NDH-1 shuttles electrons from NADH, via FMN and iron-sulfur (Fe-S) centers, to quinones in the respiratory chain. The immediate electron acceptor for the enzyme in this species is believed to be ubiquinone. Couples the redox reaction to proton translocation (for every two electrons transferred, four hydrogen ions are translocated across the cytoplasmic membrane), and thus conserves the redox energy in a proton gradient. This Rhodopseudomonas palustris (strain TIE-1) protein is NADH-quinone oxidoreductase subunit K.